The sequence spans 361 residues: Rhomboid domain-containing protein 2 (361 aa).

5 helical membrane-spanning segments follow: residues 19 to 39 (SATFFTALLSLLVSGPRLFLL), 63 to 83 (LVTYIFVYENPVSLLCGAIII), 100 to 120 (CFFTLIFTVFSAIIYLSFESV), 158 to 178 (FGVVVPSVLVPWLLLCASWLI), and 182 to 202 (SFLSNVSGLLIGLSYGLTYCY). 2 disordered regions span residues 265-287 (PSYPVTQMQHASGQKLASWPPGH) and 318-361 (PASA…VAMP). 2 stretches are compositionally biased toward polar residues: residues 267–276 (YPVTQMQHAS) and 318–328 (PASAGTSQGVQ).

This sequence belongs to the peptidase S54 family. In terms of assembly, might form homotrimers; these trimers are only formed in retina. As to expression, widely expressed, including in retina and brain (at protein level), as well as in kidney, testis and ovary. Expressed in all layers of the retina, including inner segments of photoreceptor cells and ganglion cells (at protein level).

The protein localises to the golgi apparatus. Its subcellular location is the cis-Golgi network membrane. The polypeptide is Rhomboid domain-containing protein 2 (Rhbdd2) (Mus musculus (Mouse)).